The primary structure comprises 126 residues: Alpha-1-purothionin (126 aa).

A signal peptide spans 1–16; sequence CLLILGLVLEQLQVEG. Cystine bridges form between cysteine 19-cysteine 55, cysteine 20-cysteine 47, cysteine 28-cysteine 45, and cysteine 32-cysteine 41. The propeptide at 62–126 is acidic domain; it reads LALESNSDEP…DAGLPSLDAY (65 aa).

The protein belongs to the plant thionin (TC 1.C.44) family. 4 C-C subfamily.

The protein resides in the secreted. In terms of biological role, thionins are small plant proteins which are toxic to animal cells. They seem to exert their toxic effect at the level of the cell membrane. Their precise function is not known. This Triticum aestivum (Wheat) protein is Alpha-1-purothionin (THI1.1).